A 206-amino-acid chain; its full sequence is Urease accessory protein UreG (206 aa).

12-19 (GPVGSGKT) contributes to the GTP binding site.

This sequence belongs to the SIMIBI class G3E GTPase family. UreG subfamily. As to quaternary structure, homodimer. UreD, UreF and UreG form a complex that acts as a GTP-hydrolysis-dependent molecular chaperone, activating the urease apoprotein by helping to assemble the nickel containing metallocenter of UreC. The UreE protein probably delivers the nickel.

The protein localises to the cytoplasm. Its function is as follows. Facilitates the functional incorporation of the urease nickel metallocenter. This process requires GTP hydrolysis, probably effectuated by UreG. This chain is Urease accessory protein UreG, found in Synechocystis sp. (strain ATCC 27184 / PCC 6803 / Kazusa).